Here is a 397-residue protein sequence, read N- to C-terminus: Succinyl-diaminopimelate desuccinylase (397 aa).

Histidine 73 provides a ligand contact to Zn(2+). Aspartate 75 is an active-site residue. Aspartate 106 is a binding site for Zn(2+). Glutamate 140 functions as the Proton acceptor in the catalytic mechanism. Zn(2+) is bound by residues glutamate 141, glutamate 169, and histidine 366.

This sequence belongs to the peptidase M20A family. DapE subfamily. Homodimer. Zn(2+) is required as a cofactor. The cofactor is Co(2+).

The enzyme catalyses N-succinyl-(2S,6S)-2,6-diaminopimelate + H2O = (2S,6S)-2,6-diaminopimelate + succinate. The protein operates within amino-acid biosynthesis; L-lysine biosynthesis via DAP pathway; LL-2,6-diaminopimelate from (S)-tetrahydrodipicolinate (succinylase route): step 3/3. Functionally, catalyzes the hydrolysis of N-succinyl-L,L-diaminopimelic acid (SDAP), forming succinate and LL-2,6-diaminopimelate (DAP), an intermediate involved in the bacterial biosynthesis of lysine and meso-diaminopimelic acid, an essential component of bacterial cell walls. The protein is Succinyl-diaminopimelate desuccinylase of Rhizobium rhizogenes (strain K84 / ATCC BAA-868) (Agrobacterium radiobacter).